We begin with the raw amino-acid sequence, 466 residues long: 3-isopropylmalate dehydratase large subunit (466 aa).

[4Fe-4S] cluster is bound by residues Cys-347, Cys-407, and Cys-410.

Belongs to the aconitase/IPM isomerase family. LeuC type 1 subfamily. Heterodimer of LeuC and LeuD. It depends on [4Fe-4S] cluster as a cofactor.

It catalyses the reaction (2R,3S)-3-isopropylmalate = (2S)-2-isopropylmalate. It functions in the pathway amino-acid biosynthesis; L-leucine biosynthesis; L-leucine from 3-methyl-2-oxobutanoate: step 2/4. Functionally, catalyzes the isomerization between 2-isopropylmalate and 3-isopropylmalate, via the formation of 2-isopropylmaleate. In Pseudoalteromonas translucida (strain TAC 125), this protein is 3-isopropylmalate dehydratase large subunit.